Consider the following 369-residue polypeptide: Queuine tRNA-ribosyltransferase accessory subunit 2 (369 aa).

The segment at 263 to 282 is disordered; the sequence is SSKLTEVEEENGNDSSNDQD. Positions 308, 310, 313, and 339 each coordinate Zn(2+).

This sequence belongs to the queuine tRNA-ribosyltransferase family. QTRT2 subfamily. As to quaternary structure, heterodimer of a catalytic subunit and an accessory subunit. Requires Zn(2+) as cofactor.

It is found in the cytoplasm. In terms of biological role, non-catalytic subunit of the queuine tRNA-ribosyltransferase (TGT) that catalyzes the base-exchange of a guanine (G) residue with queuine (Q) at position 34 (anticodon wobble position) in tRNAs with GU(N) anticodons (tRNA-Asp, -Asn, -His and -Tyr), resulting in the hypermodified nucleoside queuosine (7-(((4,5-cis-dihydroxy-2-cyclopenten-1-yl)amino)methyl)-7-deazaguanosine). In Trichoplax adhaerens (Trichoplax reptans), this protein is Queuine tRNA-ribosyltransferase accessory subunit 2.